We begin with the raw amino-acid sequence, 479 residues long: Inhibitory synaptic factor 2A (479 aa).

Ser177 is subject to Phosphoserine. 2 disordered regions span residues 226-247 (GRAKQDRGRPNSEEPAPPALRR) and 315-338 (SPECSEQPSQTHTPPGLGNQPSPT). Basic and acidic residues predominate over residues 228 to 237 (AKQDRGRPNS). A compositionally biased stretch (polar residues) spans 318 to 337 (CSEQPSQTHTPPGLGNQPSP). The stretch at 353 to 379 (TEVVDLKAQLQMMENLISSSQETIKVL) forms a coiled coil. The segment covering 449–461 (SPYSQETYSSTPK) has biased composition (polar residues). The segment at 449–472 (SPYSQETYSSTPKQKSKTESKKHG) is disordered.

This sequence belongs to the INSYN2 family. As to quaternary structure, interacts with GPHN.

It is found in the postsynaptic density. Functionally, component of the protein machinery at the inhibitory synapses, probably acting as a scaffold. Inhibitory synapses dampen neuronal activity through postsynaptic hyperpolarization. This synaptic inhibition is fundamental for the functioning of the central nervous system, shaping and orchestrating the flow of information through neuronal networks to generate a precise neural code. This is Inhibitory synaptic factor 2A from Homo sapiens (Human).